A 419-amino-acid chain; its full sequence is Transcription termination factor Rho (419 aa).

The region spanning 48–123 is the Rho RNA-BD domain; the sequence is EISGDGVLEI…LKVDSINFDR (76 aa). RNA-binding regions lie at residues 61 to 66, 78 to 80, and 108 to 110; these read GFGFLR, DIY, and ERY. ATP-binding positions include 169–174, 181–186, and R212; these read GKGQRG and KAGKTI. An RNA-binding 2 region spans residues 284–288; that stretch reads VLTGG.

It belongs to the Rho family. As to quaternary structure, homohexamer. The homohexamer assembles into an open ring structure.

Functionally, facilitates transcription termination by a mechanism that involves Rho binding to the nascent RNA, activation of Rho's RNA-dependent ATPase activity, and release of the mRNA from the DNA template. This is Transcription termination factor Rho from Pseudomonas aeruginosa (strain ATCC 15692 / DSM 22644 / CIP 104116 / JCM 14847 / LMG 12228 / 1C / PRS 101 / PAO1).